The primary structure comprises 197 residues: Rac-like GTP-binding protein RHO1 (197 aa).

13 to 20 provides a ligand contact to GTP; that stretch reads GDGAVGKT. An Effector region motif is present at residues 35–43; that stretch reads YVPTVFDNF. GTP is bound by residues 60–64 and 118–121; these read DTAGQ and TKLD. A Cysteine methyl ester modification is found at cysteine 194. Cysteine 194 is lipidated: S-geranylgeranyl cysteine. The propeptide at 195–197 is removed in mature form; that stretch reads SIL.

This sequence belongs to the small GTPase superfamily. Rho family. As to expression, expressed at the tip of pollen tubes.

The protein localises to the cytoplasm. It is found in the membrane. Its function is as follows. Inactive GDP-bound Rho GTPases reside in the cytosol, are found in a complex with Rho GDP-dissociation inhibitors (Rho GDIs), and are released from the GDI protein in order to translocate to membranes upon activation. May be involved in cell polarity control during the actin-dependent tip growth of pollen tubes. This Pisum sativum (Garden pea) protein is Rac-like GTP-binding protein RHO1 (RHO1).